Reading from the N-terminus, the 1120-residue chain is Mechanosensitive channel MscK (1120 aa).

A signal peptide spans M1–A33. Residues R34 to A499 lie on the Periplasmic side of the membrane. 3 coiled-coil regions span residues T43 to A98, S126 to E266, and D360 to L422. Residues W500 to I520 form a helical membrane-spanning segment. Residues H521–A560 lie on the Cytoplasmic side of the membrane. A helical transmembrane segment spans residues L561–I581. A topological domain (periplasmic) is located at residue S582. Residues E583–W603 traverse the membrane as a helical segment. Residues K604 to S634 are Cytoplasmic-facing. The helical transmembrane segment at L635–M655 threads the bilayer. Residues D656 to D657 lie on the Periplasmic side of the membrane. A helical membrane pass occupies residues V658–M678. The Cytoplasmic portion of the chain corresponds to C679–R692. The helical transmembrane segment at L693 to G713 threads the bilayer. Residues Y714–T728 lie on the Periplasmic side of the membrane. Residues V729 to A749 traverse the membrane as a helical segment. The Cytoplasmic portion of the chain corresponds to A750 to L796. The helical transmembrane segment at L797–F817 threads the bilayer. Over S818–K839 the chain is Periplasmic. The helical transmembrane segment at N840–I860 threads the bilayer. Topologically, residues R861 to T886 are cytoplasmic. A helical transmembrane segment spans residues T887–V907. At S908–V921 the chain is on the periplasmic side. Residues G922 to F942 form a helical membrane-spanning segment. Topologically, residues E943–G1120 are cytoplasmic. Positions Y1057 to E1081 form a coiled coil.

This sequence belongs to the MscS (TC 1.A.23) family.

The protein localises to the cell inner membrane. Mechanosensitive channel that opens in response to membrane tension and specific ionic conditions. Requires high concentrations of external K(+), NH(4)(+), Rb(+) or Cs(+) to gate. May participate in the regulation of osmotic pressure changes within the cell, although it does not appear to have a major role in osmolarity regulation. Forms an ion channel of 1.0 nanosiemens conductance. The channel can remain active for between 30 seconds and over 3 minutes; it does not desensitize upon extended pressure. Its activity is masked in wild-type cells by the MscS channel. The polypeptide is Mechanosensitive channel MscK (mscK) (Escherichia coli (strain K12)).